Here is a 230-residue protein sequence, read N- to C-terminus: Demethylmenaquinone methyltransferase (230 aa).

Residues threonine 62, aspartate 80, 100-101 (DA), and serine 117 each bind S-adenosyl-L-methionine.

This sequence belongs to the class I-like SAM-binding methyltransferase superfamily. MenG/UbiE family.

It carries out the reaction a 2-demethylmenaquinol + S-adenosyl-L-methionine = a menaquinol + S-adenosyl-L-homocysteine + H(+). It functions in the pathway quinol/quinone metabolism; menaquinone biosynthesis; menaquinol from 1,4-dihydroxy-2-naphthoate: step 2/2. Methyltransferase required for the conversion of demethylmenaquinol (DMKH2) to menaquinol (MKH2). The sequence is that of Demethylmenaquinone methyltransferase from Mycobacterium sp. (strain JLS).